The primary structure comprises 198 residues: MMKKAEDPLQDREGTIQEHTEGQAGTAAADQSAAVETPESRIAGLEREVQAEKEQNGKFRDELLRRAAEFENFRKQKEREAVMASQRATDNVLRDLLTLVDDVERVLANVPEPEEIPAAAKPYIDGVELLKKNLDRWLESKGVKPIEAIGMKLDVDFHEAISQIEHPDAEPETIVEQYQTGYLLGDRVLRHAKVIVAR.

Positions 1–21 (MMKKAEDPLQDREGTIQEHTE) are enriched in basic and acidic residues. The tract at residues 1 to 56 (MMKKAEDPLQDREGTIQEHTEGQAGTAAADQSAAVETPESRIAGLEREVQAEKEQN) is disordered. A compositionally biased stretch (low complexity) spans 22–34 (GQAGTAAADQSAA). Residues 44–56 (GLEREVQAEKEQN) are compositionally biased toward basic and acidic residues.

Belongs to the GrpE family. In terms of assembly, homodimer.

Its subcellular location is the cytoplasm. Its function is as follows. Participates actively in the response to hyperosmotic and heat shock by preventing the aggregation of stress-denatured proteins, in association with DnaK and GrpE. It is the nucleotide exchange factor for DnaK and may function as a thermosensor. Unfolded proteins bind initially to DnaJ; upon interaction with the DnaJ-bound protein, DnaK hydrolyzes its bound ATP, resulting in the formation of a stable complex. GrpE releases ADP from DnaK; ATP binding to DnaK triggers the release of the substrate protein, thus completing the reaction cycle. Several rounds of ATP-dependent interactions between DnaJ, DnaK and GrpE are required for fully efficient folding. The polypeptide is Protein GrpE (Chlorobium luteolum (strain DSM 273 / BCRC 81028 / 2530) (Pelodictyon luteolum)).